The sequence spans 61 residues: U-stichotoxin-Hcr1a (61 aa).

Positions 1–21 are cleaved as a signal peptide; sequence MKPAIFLMLFVAMFLISEGEG. Residues 22 to 31 constitute a propeptide that is removed on maturation; it reads FKPKDAPQER. Pro36 carries the hydroxyproline modification. 2 disulfides stabilise this stretch: Cys41–Cys53 and Cys44–Cys59.

This sequence belongs to the Hau1a/HC18/HC19 family.

Its subcellular location is the secreted. It localises to the nematocyst. Toxin that is lethal to crab. Does not produce the typical symptoms associated with sodium channel toxins in crabs, suggesting that it likely does not act on sodium channels. The sequence is that of U-stichotoxin-Hcr1a from Radianthus crispa (Leathery sea anemone).